We begin with the raw amino-acid sequence, 100 residues long: Small ribosomal subunit protein uS14 (100 aa).

It belongs to the universal ribosomal protein uS14 family. Part of the 30S ribosomal subunit. Contacts proteins S3 and S10.

In terms of biological role, binds 16S rRNA, required for the assembly of 30S particles and may also be responsible for determining the conformation of the 16S rRNA at the A site. This chain is Small ribosomal subunit protein uS14, found in Trichormus variabilis (strain ATCC 29413 / PCC 7937) (Anabaena variabilis).